The sequence spans 148 residues: Deoxyuridine 5'-triphosphate nucleotidohydrolase (148 aa).

Residues 67-69 (RSG), Asn80, 84-86 (LID), and Met94 each bind substrate.

This sequence belongs to the dUTPase family. Mg(2+) is required as a cofactor.

It catalyses the reaction dUTP + H2O = dUMP + diphosphate + H(+). It participates in pyrimidine metabolism; dUMP biosynthesis; dUMP from dCTP (dUTP route): step 2/2. This enzyme is involved in nucleotide metabolism: it produces dUMP, the immediate precursor of thymidine nucleotides and it decreases the intracellular concentration of dUTP so that uracil cannot be incorporated into DNA. This Ralstonia pickettii (strain 12J) protein is Deoxyuridine 5'-triphosphate nucleotidohydrolase.